Here is a 239-residue protein sequence, read N- to C-terminus: Ribulose-phosphate 3-epimerase (239 aa).

Residue Ser9 participates in substrate binding. His34, Asp36, and His78 together coordinate a divalent metal cation. Asp36 functions as the Proton acceptor in the catalytic mechanism. Residues His78, 154–157 (GFGG), 183–185 (DGG), and 205–207 (GTS) each bind substrate. Asp183 is a binding site for a divalent metal cation. Catalysis depends on Asp183, which acts as the Proton donor.

Belongs to the ribulose-phosphate 3-epimerase family. Co(2+) is required as a cofactor. Fe(2+) serves as cofactor. It depends on Mn(2+) as a cofactor. The cofactor is Zn(2+).

The catalysed reaction is D-ribulose 5-phosphate = D-xylulose 5-phosphate. It functions in the pathway carbohydrate degradation; pentose phosphate pathway; D-xylulose 5-phosphate from D-ribulose 5-phosphate (non-oxidative stage): step 1/1. In terms of biological role, catalyzes the reversible epimerization of D-ribulose 5-phosphate to D-xylulose 5-phosphate. The sequence is that of Ribulose-phosphate 3-epimerase (RPE1) from Eremothecium gossypii (strain ATCC 10895 / CBS 109.51 / FGSC 9923 / NRRL Y-1056) (Yeast).